The primary structure comprises 231 residues: Transmembrane gamma-carboxyglutamic acid protein 3 (231 aa).

Positions 1 to 19 (MAVFLEAKNAHAVLKRFPR) are excised as a propeptide. The 46-residue stretch at 20-65 (ANEFLEELRQGTIERECMEEICSYEEVKEVFENKEKTMEFWKGYPN) folds into the Gla domain. At 20–78 (ANEFLEELRQGTIERECMEEICSYEEVKEVFENKEKTMEFWKGYPNAVYSVRDPSQSSD) the chain is on the extracellular side. 4-carboxyglutamate is present on residues Glu-22, Glu-25, Glu-26, Glu-33, Glu-35, Glu-38, Glu-39, Glu-44, Glu-45, Glu-48, Glu-51, Glu-54, and Glu-58. Cys-36 and Cys-41 are joined by a disulfide. A helical membrane pass occupies residues 79 to 101 (AMYVVVPLLGVVLLIVIALFIIW). The Cytoplasmic segment spans residues 102 to 231 (RCQLQKATRH…IVAASPSADK (130 aa)). Disordered stretches follow at residues 140-165 (HSQGESSGHREAGNNPQIVMGPSRGG) and 184-231 (RLSS…SADK). Polar residues predominate over residues 201-212 (QEGSSEEASVSY).

In terms of processing, gla residues are produced after subsequent post-translational modifications of glutamate by a vitamin K-dependent gamma-carboxylase.

It localises to the membrane. In Mus musculus (Mouse), this protein is Transmembrane gamma-carboxyglutamic acid protein 3 (Prrg3).